A 287-amino-acid polypeptide reads, in one-letter code: Phosphatidylserine decarboxylase proenzyme (287 aa).

Residues aspartate 90, histidine 147, and serine 252 each act as charge relay system; for autoendoproteolytic cleavage activity in the active site. Serine 252 (schiff-base intermediate with substrate; via pyruvic acid; for decarboxylase activity) is an active-site residue. Serine 252 is modified (pyruvic acid (Ser); by autocatalysis).

The protein belongs to the phosphatidylserine decarboxylase family. PSD-B subfamily. Prokaryotic type I sub-subfamily. In terms of assembly, heterodimer of a large membrane-associated beta subunit and a small pyruvoyl-containing alpha subunit. It depends on pyruvate as a cofactor. Post-translationally, is synthesized initially as an inactive proenzyme. Formation of the active enzyme involves a self-maturation process in which the active site pyruvoyl group is generated from an internal serine residue via an autocatalytic post-translational modification. Two non-identical subunits are generated from the proenzyme in this reaction, and the pyruvate is formed at the N-terminus of the alpha chain, which is derived from the carboxyl end of the proenzyme. The autoendoproteolytic cleavage occurs by a canonical serine protease mechanism, in which the side chain hydroxyl group of the serine supplies its oxygen atom to form the C-terminus of the beta chain, while the remainder of the serine residue undergoes an oxidative deamination to produce ammonia and the pyruvoyl prosthetic group on the alpha chain. During this reaction, the Ser that is part of the protease active site of the proenzyme becomes the pyruvoyl prosthetic group, which constitutes an essential element of the active site of the mature decarboxylase.

It localises to the cell membrane. The catalysed reaction is a 1,2-diacyl-sn-glycero-3-phospho-L-serine + H(+) = a 1,2-diacyl-sn-glycero-3-phosphoethanolamine + CO2. It functions in the pathway phospholipid metabolism; phosphatidylethanolamine biosynthesis; phosphatidylethanolamine from CDP-diacylglycerol: step 2/2. Functionally, catalyzes the formation of phosphatidylethanolamine (PtdEtn) from phosphatidylserine (PtdSer). The polypeptide is Phosphatidylserine decarboxylase proenzyme (Pseudomonas putida (strain W619)).